The sequence spans 324 residues: Signal peptidase I (324 aa).

Residues 1–3 (MAN) lie on the Periplasmic side of the membrane. The chain crosses the membrane as a helical span at residues 4 to 22 (MFALILVIATLVTGILWCV). Topologically, residues 23-58 (DKFVFAPKRRARQAAAQTASGDALDNATLNKVAPKP) are cytoplasmic. Residues 59–77 (GWLETGASVFPVLAIVLIV) traverse the membrane as a helical segment. Topologically, residues 78–324 (RSFLYEPFQI…VRLSRIGGIH (247 aa)) are periplasmic. Active-site residues include S91 and K146.

Belongs to the peptidase S26 family.

It localises to the cell inner membrane. It carries out the reaction Cleavage of hydrophobic, N-terminal signal or leader sequences from secreted and periplasmic proteins.. The polypeptide is Signal peptidase I (lepB) (Salmonella typhi).